The sequence spans 1030 residues: ADAMTS-like protein 4 (1030 aa).

An N-terminal signal peptide occupies residues 1 to 24; it reads MELWLGRLWLYVMLLLLLLQLCQD. Positions 47-91 constitute a TSP type-1 1 domain; the sequence is GPWGRWASCSQPCGVGVQRRSRTCELHPALSLPPRPPRHPEAPQP. Disordered regions lie at residues 73-150 and 168-306; these read HPAL…KPGM and LAHK…LPLT. Composition is skewed to polar residues over residues 176 to 186, 211 to 237, and 245 to 257; these read KDSSTAEETLP, QSRSPSAETPRSGTAQTEVPSRTSSAP, and PTSSFRDSRSFQG. Residues N451 and N731 are each glycosylated (N-linked (GlcNAc...) asparagine). 5 TSP type-1 domains span residues 681–740, 741–800, 803–865, 866–925, and 926–982; these read CPPY…QLRL, CGHW…GPCT, WFYS…GPCE, KTWR…QGQA, and CEDQ…QPCN. In terms of domain architecture, PLAC spans 985-1022; sequence PDDQCKDSSPHCPLVVQARLCVYPYYTATCCRSCAHVL.

In terms of assembly, interacts with CTSB. Interacts with FBN1. Glycosylated. Can be O-fucosylated by POFUT2 on a serine or a threonine residue found within the consensus sequence C1-X(2)-(S/T)-C2-G of the TSP type-1 repeat domains where C1 and C2 are the first and second cysteine residue of the repeat, respectively. Fucosylated repeats can then be further glycosylated by the addition of a beta-1,3-glucose residue by the glucosyltransferase, B3GALTL. Fucosylation mediates the efficient secretion of ADAMTS family members. Can also be C-glycosylated with one or two mannose molecules on tryptophan residues within the consensus sequence W-X-X-W of the TPRs, and N-glycosylated. These other glycosylations can also facilitate secretion.

The protein localises to the secreted. It is found in the extracellular space. The protein resides in the extracellular matrix. Functionally, positive regulation of apoptosis. May facilitate FBN1 microfibril biogenesis. This Rattus norvegicus (Rat) protein is ADAMTS-like protein 4.